Consider the following 154-residue polypeptide: MGSVLVDLQIATENIEGLPTEEQIVQWATGAVQPEGNEVEMTVRIVDEAESHELNLTYRGKDRPTNVLSFPFECPDEVELPLLGDLVICRQVVEREAAEQEKPLMAHWAHMVVHGCLHLLGYDHIEDDEAEEMESLETQIMQGLGFDDPYLAEK.

Residues H114, H118, and H124 each contribute to the Zn(2+) site.

This sequence belongs to the endoribonuclease YbeY family. Zn(2+) serves as cofactor.

It localises to the cytoplasm. Its function is as follows. Single strand-specific metallo-endoribonuclease involved in late-stage 70S ribosome quality control and in maturation of the 3' terminus of the 16S rRNA. This is Endoribonuclease YbeY from Haemophilus influenzae (strain 86-028NP).